Consider the following 317-residue polypeptide: Putrescine transport system permease protein PotH (317 aa).

At 1-31 (MSTLEPAAQSKPPGGFKLWLSQLQMKHGRKL) the chain is on the cytoplasmic side. The helical transmembrane segment at 32–51 (VIALPYIWLILLFLLPFLIV) threads the bilayer. At 52–104 (FKISLAEMARAIPPYTELMEWADGQLSITLNLGNFLQLTDDPLYFDAYLQSLQ) the chain is on the periplasmic side. The ABC transmembrane type-1 domain occupies 99–305 (YLQSLQVAAI…LLLIVPIMWF (207 aa)). Residues 105 to 124 (VAAISTFCCLLIGYPLAWAV) traverse the membrane as a helical segment. Residues 125–133 (AHSKPSTRN) lie on the Cytoplasmic side of the membrane. Residues 134–153 (ILLLLVILPSWTSFLIRVYA) traverse the membrane as a helical segment. Residues 154–184 (WMGILKNNGVLNNFLLWLGVIDQPLTILHTN) lie on the Periplasmic side of the membrane. The helical transmembrane segment at 185–204 (LAVYIGIVYAYVPFMVLPIY) threads the bilayer. At 205–239 (TALIRIDYSLVEAALDLGARPLKTFFTVIVPLTKG) the chain is on the cytoplasmic side. The chain crosses the membrane as a helical span at residues 240–259 (GIIAGSMLVFIPAVGEFVIP). At 260-284 (ELLGGPDSIMIGRVLWQEFFNNRDW) the chain is on the periplasmic side. Residues 285–304 (PVASAVAIIMLLLLIVPIMW) traverse the membrane as a helical segment. Residues 305–317 (FHKHQQKSVGEHG) lie on the Cytoplasmic side of the membrane.

The protein belongs to the binding-protein-dependent transport system permease family. CysTW subfamily. In terms of assembly, the complex is composed of two ATP-binding proteins (PotG), two transmembrane proteins (PotH and PotI) and a solute-binding protein (PotF).

Its subcellular location is the cell inner membrane. With respect to regulation, transport is feedback inhibited by intracellular polyamines. Functionally, part of the ABC transporter complex PotFGHI involved in putrescine uptake. Responsible for the translocation of the substrate across the membrane. Imports putrescine for maintenance of the optimal concentration of polyamines necessary for cell growth in the presence of glucose. This is Putrescine transport system permease protein PotH from Escherichia coli (strain K12).